We begin with the raw amino-acid sequence, 92 residues long: mRNA interferase toxin YafQ (92 aa).

The active-site Proton donor is the H87.

The protein belongs to the RelE toxin family. YafQ subfamily. As to quaternary structure, monomer in solution, forms a heterotetramer with antitoxin DinJ, with 2 YafQ-DinJ dimers associated via the N-terminus of the DinJ antitoxins (YafQ-(DinJ)2-YafQ).

In terms of biological role, toxic component of a type II toxin-antitoxin (TA) system. A sequence-specific mRNA endoribonuclease that inhibits translation elongation and induces bacterial stasis. Cleavage occurs between the second and third residue of the Lys codon followed by a G or A (5'AAA(G/A)3'), is reading-frame dependent and occurs within the 5' end of most mRNAs. Ribosome-binding confers the sequence specificity and reading frame-dependence. The YafQ-DinJ heterotetramer binds the consensus sequence 5'-TTTGAGCTACA-3' in the dinJ promoter; DinJ also binds DNA but not as well as the YafQ-DinJ complex. This is mRNA interferase toxin YafQ (yafQ) from Escherichia coli (strain B / BL21-DE3).